A 407-amino-acid chain; its full sequence is Imidazolonepropionase (407 aa).

Residues His-68 and His-70 each coordinate Fe(3+). Residues His-68 and His-70 each contribute to the Zn(2+) site. 3 residues coordinate 4-imidazolone-5-propanoate: Arg-77, Tyr-140, and His-173. An N-formimidoyl-L-glutamate-binding site is contributed by Tyr-140. His-238 is a binding site for Fe(3+). Residue His-238 participates in Zn(2+) binding. Gln-241 contributes to the 4-imidazolone-5-propanoate binding site. Residue Asp-313 participates in Fe(3+) binding. Residue Asp-313 coordinates Zn(2+). Positions 315 and 317 each coordinate N-formimidoyl-L-glutamate. Residue Thr-318 participates in 4-imidazolone-5-propanoate binding.

The protein belongs to the metallo-dependent hydrolases superfamily. HutI family. Zn(2+) serves as cofactor. It depends on Fe(3+) as a cofactor.

Its subcellular location is the cytoplasm. The catalysed reaction is 4-imidazolone-5-propanoate + H2O = N-formimidoyl-L-glutamate. It participates in amino-acid degradation; L-histidine degradation into L-glutamate; N-formimidoyl-L-glutamate from L-histidine: step 3/3. Functionally, catalyzes the hydrolytic cleavage of the carbon-nitrogen bond in imidazolone-5-propanoate to yield N-formimidoyl-L-glutamate. It is the third step in the universal histidine degradation pathway. This chain is Imidazolonepropionase, found in Burkholderia multivorans (strain ATCC 17616 / 249).